A 357-amino-acid chain; its full sequence is Protein-arginine kinase (357 aa).

The 233-residue stretch at 24 to 256 (VIISSRVRLA…LQLVTQERAA (233 aa)) folds into the Phosphagen kinase C-terminal domain. ATP is bound by residues 27–31 (SSRVR), His-93, Arg-127, 178–182 (RASVM), and 209–214 (RGLYGE). Positions 339–344 (RDIFRA) match the RDXXRA motif of the pArg binding pocket involved in allosteric regulation motif.

This sequence belongs to the ATP:guanido phosphotransferase family.

The catalysed reaction is L-arginyl-[protein] + ATP = N(omega)-phospho-L-arginyl-[protein] + ADP + H(+). Appears to be allosterically activated by the binding of pArg-containing polypeptides to the pArg-binding pocket localized in the C-terminal domain of McsB. Its function is as follows. Catalyzes the specific phosphorylation of arginine residues in proteins. This Desulforamulus reducens (strain ATCC BAA-1160 / DSM 100696 / MI-1) (Desulfotomaculum reducens) protein is Protein-arginine kinase.